The sequence spans 124 residues: S-adenosylmethionine decarboxylase proenzyme (124 aa).

Ser-70 (schiff-base intermediate with substrate; via pyruvic acid) is an active-site residue. A Pyruvic acid (Ser); by autocatalysis modification is found at Ser-70. His-75 serves as the catalytic Proton acceptor; for processing activity. Cys-90 functions as the Proton donor; for catalytic activity in the catalytic mechanism.

This sequence belongs to the prokaryotic AdoMetDC family. Type 1 subfamily. Heterotetramer of two alpha and two beta chains arranged as a dimer of alpha/beta heterodimers. Pyruvate serves as cofactor. Is synthesized initially as an inactive proenzyme. Formation of the active enzyme involves a self-maturation process in which the active site pyruvoyl group is generated from an internal serine residue via an autocatalytic post-translational modification. Two non-identical subunits are generated from the proenzyme in this reaction, and the pyruvate is formed at the N-terminus of the alpha chain, which is derived from the carboxyl end of the proenzyme. The post-translation cleavage follows an unusual pathway, termed non-hydrolytic serinolysis, in which the side chain hydroxyl group of the serine supplies its oxygen atom to form the C-terminus of the beta chain, while the remainder of the serine residue undergoes an oxidative deamination to produce ammonia and the pyruvoyl group blocking the N-terminus of the alpha chain.

The enzyme catalyses S-adenosyl-L-methionine + H(+) = S-adenosyl 3-(methylsulfanyl)propylamine + CO2. Its pathway is amine and polyamine biosynthesis; S-adenosylmethioninamine biosynthesis; S-adenosylmethioninamine from S-adenosyl-L-methionine: step 1/1. Catalyzes the decarboxylation of S-adenosylmethionine to S-adenosylmethioninamine (dcAdoMet), the propylamine donor required for the synthesis of the polyamines spermine and spermidine from the diamine putrescine. The protein is S-adenosylmethionine decarboxylase proenzyme of Pyrobaculum neutrophilum (strain DSM 2338 / JCM 9278 / NBRC 100436 / V24Sta) (Thermoproteus neutrophilus).